The following is a 241-amino-acid chain: Geranylgeranylglyceryl phosphate synthase (241 aa).

Positions 26 and 52 each coordinate Mg(2+). Sn-glycerol 1-phosphate contacts are provided by residues 172-178 (YFEAGSG), 204-205 (GG), and 226-227 (GT).

Belongs to the GGGP/HepGP synthase family. Group II subfamily. The cofactor is Mg(2+).

The protein localises to the cytoplasm. The catalysed reaction is sn-glycerol 1-phosphate + (2E,6E,10E)-geranylgeranyl diphosphate = sn-3-O-(geranylgeranyl)glycerol 1-phosphate + diphosphate. It participates in membrane lipid metabolism; glycerophospholipid metabolism. In terms of biological role, prenyltransferase that catalyzes the transfer of the geranylgeranyl moiety of geranylgeranyl diphosphate (GGPP) to the C3 hydroxyl of sn-glycerol-1-phosphate (G1P). This reaction is the first ether-bond-formation step in the biosynthesis of archaeal membrane lipids. This chain is Geranylgeranylglyceryl phosphate synthase, found in Hyperthermus butylicus (strain DSM 5456 / JCM 9403 / PLM1-5).